A 334-amino-acid chain; its full sequence is Ornithine carbamoyltransferase (334 aa).

Carbamoyl phosphate contacts are provided by residues 57 to 60, Gln-84, Arg-108, and 135 to 138; these read STRT and HPTQ. L-ornithine contacts are provided by residues Asn-169, Asp-233, and 237 to 238; that span reads SM. Carbamoyl phosphate is bound by residues 275 to 276 and Arg-320; that span reads CL.

Belongs to the aspartate/ornithine carbamoyltransferase superfamily. OTCase family.

Its subcellular location is the cytoplasm. The enzyme catalyses carbamoyl phosphate + L-ornithine = L-citrulline + phosphate + H(+). Its pathway is amino-acid biosynthesis; L-arginine biosynthesis; L-arginine from L-ornithine and carbamoyl phosphate: step 1/3. Its function is as follows. Reversibly catalyzes the transfer of the carbamoyl group from carbamoyl phosphate (CP) to the N(epsilon) atom of ornithine (ORN) to produce L-citrulline. The protein is Ornithine carbamoyltransferase of Vibrio campbellii (strain ATCC BAA-1116).